The sequence spans 366 residues: Histidinol-phosphate aminotransferase 1 (366 aa).

Position 226 is an N6-(pyridoxal phosphate)lysine (Lys-226).

It belongs to the class-II pyridoxal-phosphate-dependent aminotransferase family. Histidinol-phosphate aminotransferase subfamily. In terms of assembly, homodimer. Pyridoxal 5'-phosphate serves as cofactor.

The enzyme catalyses L-histidinol phosphate + 2-oxoglutarate = 3-(imidazol-4-yl)-2-oxopropyl phosphate + L-glutamate. The protein operates within amino-acid biosynthesis; L-histidine biosynthesis; L-histidine from 5-phospho-alpha-D-ribose 1-diphosphate: step 7/9. The polypeptide is Histidinol-phosphate aminotransferase 1 (Mannheimia succiniciproducens (strain KCTC 0769BP / MBEL55E)).